The chain runs to 1259 residues: Protein flightless-1 homolog (1259 aa).

15 LRR repeats span residues 7–32 (LPFI…VKSM), 33–55 (TSLR…LASL), 56–78 (QKLE…LSSL), 80–103 (NLRA…IFQL), 104–126 (DDLS…LENS), 128–149 (NMLV…LFIN), 150–173 (LTDL…MRRL), 176–201 (LQTL…VSLQ), 222–245 (LSNL…LYSL), 247–268 (NLKR…IDQW), 269–291 (TKLE…ICKL), 293–316 (KLKK…VGKL), 317–339 (SNLV…LCRC), 340–363 (GKLK…HFLT), and 365–385 (LEVL…PVDR). 4 Gelsolin-like repeats span residues 509 to 589 (IPIQ…SEEF), 628 to 702 (NIRL…PEFW), 757 to 830 (DVVP…CQVF), and 1170 to 1225 (EKCS…RSKD).

Expressed in ventricular cardiomyocytes, where it particularly localizes to intercalated disks and costamere-like structures (at protein level).

It is found in the nucleus. The protein localises to the cytoplasm. Its subcellular location is the cytoskeleton. It localises to the microtubule organizing center. The protein resides in the centrosome. It is found in the cell junction. The protein localises to the focal adhesion. Its function is as follows. Is a regulator of actin polymerization, required for proper myofibril organization and the assembly of cardiomyocyte cell adhesion complexes. Is a regulator of the length of sarcomeric thin filaments. Regulates cytoskeletal rearrangements involved in cytokinesis and cell migration, by inhibiting Rac1-dependent paxillin phosphorylation. May play a role as coactivator in transcriptional activation by hormone-activated nuclear receptors (NR) and acts in cooperation with NCOA2 and CARM1. Involved in estrogen hormone signaling. This chain is Protein flightless-1 homolog, found in Danio rerio (Zebrafish).